A 132-amino-acid polypeptide reads, in one-letter code: Replication enhancer protein (132 aa).

It belongs to the geminiviridae replication enhancer protein family. As to quaternary structure, homooligomer. Interacts with the replication-associated protein (REP). Interacts with host proliferating cell nuclear antigen (PCNA). Interacts with host retinoblastoma-related protein 1 (RBR1), and may thereby deregulate the host cell cycle. Oligomerization and interaction with PCNA are necessary for optimal replication enhancement.

Its function is as follows. Increases viral DNA accumulation. Enhances infectivity and symptom expression. In Cabbage leaf curl virus (isolate Jamaica) (CaLCuV), this protein is Replication enhancer protein.